Reading from the N-terminus, the 97-residue chain is Small ribosomal subunit protein bS20 (97 aa).

The protein belongs to the bacterial ribosomal protein bS20 family.

Its function is as follows. Binds directly to 16S ribosomal RNA. This chain is Small ribosomal subunit protein bS20, found in Prochlorococcus marinus (strain MIT 9301).